A 368-amino-acid chain; its full sequence is Galanin receptor type 3 (368 aa).

Residues 1–20 lie on the Extracellular side of the membrane; the sequence is MADAQNISLDSPGSVGAVAV. Residue N6 is glycosylated (N-linked (GlcNAc...) asparagine). The helical transmembrane segment at 21-41 threads the bilayer; the sequence is PVVFALIFLLGTVGNGLVLAV. Residues 42 to 57 are Cytoplasmic-facing; the sequence is LLQPGPSAWQEPGSTT. The helical transmembrane segment at 58-78 threads the bilayer; the sequence is DLFILNLAVADLCFILCCVPF. Residues 79–96 lie on the Extracellular side of the membrane; sequence QATIYTLDAWLFGALVCK. A disulfide bridge connects residues C95 and C172. Residues 97–118 traverse the membrane as a helical segment; the sequence is AVHLLIYLTMYASSFTLAAVSV. Over 119 to 138 the chain is Cytoplasmic; it reads DRYLAVRHPLRSRALRTPRN. A helical membrane pass occupies residues 139–159; the sequence is ARAAVGLVWLLAALFSAPYLS. At 160 to 184 the chain is on the extracellular side; the sequence is YYGTVRYGALELCVPAWEDARRRAL. Residues 185–205 form a helical membrane-spanning segment; sequence DVATFAAGYLLPVAVVSLAYG. At 206 to 236 the chain is on the cytoplasmic side; the sequence is RTLRFLWAAVGPAGAAAAEARRRATGRAGRA. The helical transmembrane segment at 237–257 threads the bilayer; sequence MLAVAALYALCWGPHHALILC. Residues 258-259 lie on the Extracellular side of the membrane; that stretch reads FW. A helical transmembrane segment spans residues 260–280; it reads YGRFAFSPATYACRLASHCLA. At 281–368 the chain is on the cytoplasmic side; it reads YANSCLNPLV…HGGEAARGPE (88 aa). A lipid anchor (S-palmitoyl cysteine) is attached at C308. Residues 317–368 are disordered; the sequence is RRALRRVRPASSGPPGCPGDARPSGRLLAGGGQGPEPREGPVHGGEAARGPE.

The protein belongs to the G-protein coupled receptor 1 family.

Its subcellular location is the cell membrane. Receptor for the hormone galanin. Receptor for the hormone spexin-1. The chain is Galanin receptor type 3 (GALR3) from Homo sapiens (Human).